The chain runs to 387 residues: 3-ketoacyl-CoA thiolase (387 aa).

Residue cysteine 91 is the Acyl-thioester intermediate of the active site. Active-site proton acceptor residues include histidine 343 and cysteine 373.

This sequence belongs to the thiolase-like superfamily. Thiolase family. As to quaternary structure, heterotetramer of two alpha chains (FadB) and two beta chains (FadA).

It is found in the cytoplasm. The enzyme catalyses an acyl-CoA + acetyl-CoA = a 3-oxoacyl-CoA + CoA. The protein operates within lipid metabolism; fatty acid beta-oxidation. Catalyzes the final step of fatty acid oxidation in which acetyl-CoA is released and the CoA ester of a fatty acid two carbons shorter is formed. This Shigella boydii serotype 4 (strain Sb227) protein is 3-ketoacyl-CoA thiolase.